Reading from the N-terminus, the 228-residue chain is Octanoyltransferase (228 aa).

Residues 30–213 form the BPL/LPL catalytic domain; that stretch reads NKVEDIMLLL…YFSRVFDFEP (184 aa). Residues 75-82, 143-145, and 156-158 each bind substrate; these read RGGDVTYH, AIG, and GFA. Residue cysteine 174 is the Acyl-thioester intermediate of the active site.

This sequence belongs to the LipB family.

Its subcellular location is the cytoplasm. It catalyses the reaction octanoyl-[ACP] + L-lysyl-[protein] = N(6)-octanoyl-L-lysyl-[protein] + holo-[ACP] + H(+). It functions in the pathway protein modification; protein lipoylation via endogenous pathway; protein N(6)-(lipoyl)lysine from octanoyl-[acyl-carrier-protein]: step 1/2. Catalyzes the transfer of endogenously produced octanoic acid from octanoyl-acyl-carrier-protein onto the lipoyl domains of lipoate-dependent enzymes. Lipoyl-ACP can also act as a substrate although octanoyl-ACP is likely to be the physiological substrate. In Desulforamulus reducens (strain ATCC BAA-1160 / DSM 100696 / MI-1) (Desulfotomaculum reducens), this protein is Octanoyltransferase.